A 593-amino-acid chain; its full sequence is Salivary alpha-glucosidase (593 aa).

A signal peptide spans 1–19 (MPPLGVLLLLVALGHSTQG). The Ca(2+) site is built by Asp49, Asp51, Asp53, Ile55, Asp57, and Asn130. 2 N-linked (GlcNAc...) asparagine glycosylation sites follow: Asn130 and Asn163. Ca(2+)-binding residues include Asp201, Tyr235, Leu236, and Glu238. N-linked (GlcNAc...) asparagine glycosylation is found at Asn295, Asn310, Asn338, Asn414, Asn445, and Asn453. Asn338 serves as a coordination point for N-acetyl-beta-D-glucosamine.

Belongs to the glycosyl hydrolase 13 family. Saliva (at protein level). Proximal lateral lobes of the salivary gland (at protein level).

Its subcellular location is the secreted. The enzyme catalyses Hydrolysis of terminal, non-reducing (1-&gt;4)-linked alpha-D-glucose residues with release of alpha-D-glucose.. Functions as a glucosidase that shows high activity toward sucrose, a major component of nectar. Assists the mosquito in its sugar-feeding capabilities. The chain is Salivary alpha-glucosidase from Anopheles gambiae (African malaria mosquito).